A 346-amino-acid polypeptide reads, in one-letter code: Phosphate acyltransferase (346 aa).

This sequence belongs to the PlsX family. In terms of assembly, homodimer. Probably interacts with PlsY.

It is found in the cytoplasm. The catalysed reaction is a fatty acyl-[ACP] + phosphate = an acyl phosphate + holo-[ACP]. Its pathway is lipid metabolism; phospholipid metabolism. Catalyzes the reversible formation of acyl-phosphate (acyl-PO(4)) from acyl-[acyl-carrier-protein] (acyl-ACP). This enzyme utilizes acyl-ACP as fatty acyl donor, but not acyl-CoA. The sequence is that of Phosphate acyltransferase from Crocosphaera subtropica (strain ATCC 51142 / BH68) (Cyanothece sp. (strain ATCC 51142)).